Reading from the N-terminus, the 712-residue chain is DNA ligase (712 aa).

The segment at 1–22 is disordered; that stretch reads MVQKNEHQGGQSQHSLFAAGPT. NAD(+)-binding positions include 53–57 and D138; that span reads DDQFD. K140 (N6-AMP-lysine intermediate) is an active-site residue. 4 residues coordinate NAD(+): R161, E199, K318, and K342. The Zn(2+) site is built by C436, C439, C454, and C459. A disordered region spans residues 612-631; the sequence is RGGRSGGGSSGSTGEGGLAS. The span at 614–630 shows a compositional bias: gly residues; it reads GRSGGGSSGSTGEGGLA. The 84-residue stretch at 629-712 folds into the BRCT domain; that stretch reads LASGPLAGKN…MLREAKAASE (84 aa).

This sequence belongs to the NAD-dependent DNA ligase family. LigA subfamily. The cofactor is Mg(2+). Mn(2+) serves as cofactor.

The enzyme catalyses NAD(+) + (deoxyribonucleotide)n-3'-hydroxyl + 5'-phospho-(deoxyribonucleotide)m = (deoxyribonucleotide)n+m + AMP + beta-nicotinamide D-nucleotide.. DNA ligase that catalyzes the formation of phosphodiester linkages between 5'-phosphoryl and 3'-hydroxyl groups in double-stranded DNA using NAD as a coenzyme and as the energy source for the reaction. It is essential for DNA replication and repair of damaged DNA. The sequence is that of DNA ligase from Desulfovibrio desulfuricans (strain ATCC 27774 / DSM 6949 / MB).